The chain runs to 416 residues: Choline/ethanolaminephosphotransferase 1 (416 aa).

The segment at 1–20 is disordered; the sequence is MSGHRSTRKRCGDSHPESPV. A Phosphoserine modification is found at S18. T40 carries the phosphothreonine modification. N86 serves as a coordination point for CDP-choline. The next 2 membrane-spanning stretches (helical) occupy residues 89–108 and 116–133; these read TIIGLSINICTTILLVFYCP and LWAYIACACGLFIYQSLD. Residue D133 coordinates Mg(2+). N-linked (GlcNAc...) asparagine glycosylation occurs at N144. E151 provides a ligand contact to CDP-choline. D154 is a binding site for Mg(2+). The active-site Proton acceptor is the H155. Transmembrane regions (helical) follow at residues 156-176, 180-199, 210-230, 246-267, 286-306, 315-334, 349-363, and 368-388; these read GCDSLSTVFVVLGTCIAVQLG, DWMFFCCFAGTFMFYCAHWQ, IIDVTEVQIFIIIMHLLAVIG, MKLFPALCTVAGTIFSCTNYFR, VLSPFLHIGSVITLAVMIYKK, HPCLYILTFGFVSAKITNKL, TAFIGPALLFLDQYF, and DEYIVLWIALVFSFFDLIRYC. Residue D158 coordinates Mg(2+).

This sequence belongs to the CDP-alcohol phosphatidyltransferase class-I family. As to quaternary structure, homodimer. Mg(2+) serves as cofactor. Mn(2+) is required as a cofactor.

Its subcellular location is the endoplasmic reticulum membrane. The protein resides in the nucleus membrane. The catalysed reaction is CDP-ethanolamine + a 1,2-diacyl-sn-glycerol = a 1,2-diacyl-sn-glycero-3-phosphoethanolamine + CMP + H(+). The enzyme catalyses CDP-choline + a 1,2-diacyl-sn-glycerol = a 1,2-diacyl-sn-glycero-3-phosphocholine + CMP + H(+). It carries out the reaction 1-O-alkyl-2-acyl-sn-glycerol + CDP-choline = a 1-O-alkyl-2-acyl-sn-glycero-3-phosphocholine + CMP + H(+). It catalyses the reaction a 1-O-(1Z-alkenyl)-2-acyl-sn-glycerol + CDP-choline = a 1-O-(1Z-alkenyl)-2-acyl-sn-glycero-3-phosphocholine + CMP + H(+). The catalysed reaction is 1,2-dioctanoyl-sn-glycerol + CDP-choline = 1,2-dioctanoyl-sn-glycero-3-phosphocholine + CMP + H(+). The enzyme catalyses 1,2-didecanoyl-sn-glycerol + CDP-choline = 1,2-didecanoyl-sn-glycero-3-phosphocholine + CMP + H(+). It carries out the reaction CDP-choline + 1,2-di-(9Z-octadecenoyl)-sn-glycerol = 1,2-di-(9Z-octadecenoyl)-sn-glycero-3-phosphocholine + CMP + H(+). It catalyses the reaction 1-hexadecanoyl-2-(9Z-octadecenoyl)-sn-glycerol + CDP-choline = 1-hexadecanoyl-2-(9Z-octadecenoyl)-sn-glycero-3-phosphocholine + CMP + H(+). The catalysed reaction is CDP-ethanolamine + 1,2-di-(9Z-octadecenoyl)-sn-glycerol = 1,2-di-(9Z-octadecenoyl)-sn-glycero-3-phosphoethanolamine + CMP + H(+). The enzyme catalyses 1-hexadecanoyl-2-(9Z-octadecenoyl)-sn-glycerol + CDP-ethanolamine = 1-hexadecanoyl-2-(9Z-octadecenoyl)-sn-glycero-3-phosphoethanolamine + CMP + H(+). It carries out the reaction 1-hexadecanoyl-2-(4Z,7Z,10Z,13Z,16Z,19Z-docosahexaenoyl)-sn-glycerol + CDP-choline = 1-hexadecanoyl-2-(4Z,7Z,10Z,13Z,16Z,19Z-docosahexaenoyl)-sn-glycero-3-phosphocholine + CMP + H(+). It catalyses the reaction 1,2-di-(9Z-hexadecenoyl)-sn-glycerol + CDP-choline = 1,2-di-(9Z-hexadecenoyl)-sn-glycero-3-phosphocholine + CMP + H(+). The catalysed reaction is 1,2-di-(9Z-hexadecenoyl)-sn-glycerol + CDP-ethanolamine = 1,2-di-(9Z-hexadecenoyl)-sn-glycero-3-phosphoethanolamine + CMP + H(+). The enzyme catalyses 1-O-hexadecyl-2-acetyl-sn-glycerol + CDP-choline = 1-O-hexadecyl-2-acetyl-sn-glycero-3-phosphocholine + CMP + H(+). It carries out the reaction 1-O-hexadecyl-2-(5Z,8Z,11Z,14Z-eicosatetraenoyl)-sn-glycerol + CDP-choline = 1-O-hexadecyl-2-(5Z,8Z,11Z,14Z)-eicosatetraenoyl-sn-glycero-3-phosphocholine + CMP + H(+). Its pathway is phospholipid metabolism; phosphatidylethanolamine biosynthesis; phosphatidylethanolamine from ethanolamine: step 3/3. It participates in phospholipid metabolism; phosphatidylcholine biosynthesis; phosphatidylcholine from phosphocholine: step 2/2. Its function is as follows. Catalyzes both phosphatidylcholine and phosphatidylethanolamine biosynthesis from CDP-choline and CDP-ethanolamine, respectively. Involved in protein-dependent process of phospholipid transport to distribute phosphatidyl choline to the lumenal surface. Has a higher cholinephosphotransferase activity than ethanolaminephosphotransferase activity. This Rattus norvegicus (Rat) protein is Choline/ethanolaminephosphotransferase 1.